A 405-amino-acid chain; its full sequence is Argininosuccinate synthase (405 aa).

ATP-binding positions include 10-18 and Ala-37; that span reads AYSGGLDTS. Positions 88 and 93 each coordinate L-citrulline. Gly-118 is a binding site for ATP. L-aspartate is bound by residues Thr-120, Asn-124, and Asp-125. Asn-124 is a binding site for L-citrulline. The L-citrulline site is built by Arg-128, Ser-179, Ser-188, Glu-264, and Tyr-276.

The protein belongs to the argininosuccinate synthase family. Type 1 subfamily. Homotetramer.

It is found in the cytoplasm. The enzyme catalyses L-citrulline + L-aspartate + ATP = 2-(N(omega)-L-arginino)succinate + AMP + diphosphate + H(+). It functions in the pathway amino-acid biosynthesis; L-arginine biosynthesis; L-arginine from L-ornithine and carbamoyl phosphate: step 2/3. This is Argininosuccinate synthase from Pseudomonas syringae pv. tomato (strain ATCC BAA-871 / DC3000).